A 557-amino-acid chain; its full sequence is Transmembrane protein 209 (557 aa).

A helical transmembrane segment spans residues 28–48; the sequence is VVLAWGLLNVSLAGMIYTEMT. The N-linked (GlcNAc...) asparagine glycan is linked to Asn-57. The helical transmembrane segment at 60–80 threads the bilayer; the sequence is YWPLWYIELALASLFSLNALF. Disordered stretches follow at residues 108-156 and 194-232; these read PYSS…KFSP and YSSS…TDKE. The span at 125 to 140 shows a compositional bias: polar residues; that stretch reads VPASTPSPSMQGQNVL. Composition is skewed to low complexity over residues 141–156, 194–205, and 219–228; these read SYSP…KFSP, YSSSPGSSQYPS, and RSSPSTYSSP. N-linked (GlcNAc...) asparagine glycosylation is found at Asn-273 and Asn-343.

It is found in the membrane. The protein localises to the nucleus envelope. Its subcellular location is the golgi apparatus. It localises to the cytoplasm. In Xenopus tropicalis (Western clawed frog), this protein is Transmembrane protein 209 (tmem209).